The primary structure comprises 137 residues: Hemoglobin subunit beta (137 aa).

Positions 3-137 constitute a Globin domain; the sequence is HWTQEERDEI…VIDAISKQYH (135 aa). Positions 54 and 83 each coordinate heme b.

It belongs to the globin family. In terms of assembly, heterotetramer of two alpha chains and two beta chains. As to expression, red blood cells.

Involved in oxygen transport from gills to the various peripheral tissues. The chain is Hemoglobin subunit beta (HBB) from Mustelus griseus (Spotless smooth-hound).